The primary structure comprises 1438 residues: MAMTEQQKFKVLADQIKISNQLDAEILNSGELTRIDVSNKNRTWEFHITLPQFLAHEDYLLFIHAIEQEFKDIANVTCRFTVTNGTNQDEHAIKYFGHCIDQTALSPKVKGQLKQKKLIMSGKVLKVMVSNDIERNHFDKACNGSLIKAFRNCGFDIDKIIFETNDNDQEQNLASLEAHIQEEDEQSARLATEKLEKMKAEKAKQQDNNESAVDKCQIGKPIQIENIKPIESIIEEEFKVAIEGVIFDINLKELKSGRHIVEIKVTDYTDSLVLKMFTRKNKDDLEHFKALSVGKWVRAQGRIEEDTFIRDLVMMMSDIEEIKKATKKDKAEEKRVEFHLHTAMSQMDGIPNIGAYVKQAADWGHPAIAVTDHNVVQAFPDAHAAAEKHGIKMIYGMEGMLVDDGAPIAYKPQDVVLKDATYVVFDVETTGLSNQYNKIIELAAVKVHNGEIIDKFERFSNPHERLSETIINLTHITDDMLVDAPEIEEVLTEFKEWVGDAIFVAHNASFDMGFIDTGYERLGFGPSTNGVIDTLELSRTINTEYGKHGLNFLAKKYGVELTQHHRAIYDTEATAYIFIKMVQQMKELGVLNHNEINKKLSNQDAYKRARPSHVTLIVQNQQGLKNLFKIVSASLVKYFYRTPRIPRSLLDEYREGLLVGTACDEGELFTAVMQKDQSQVEKIAKYYDFIEIQPPALYQDLIDRELIRDTETLHEIYQRLIHAGDTAGIPVIATGNAHYLFEHDGIARKILIASQPGNPLNRSTLPEAHFRTTDEMLNEFHFLGEEKAHEIVVKNTNELADRIERVVPIKDELYTPRMEGANEEIRELSYANARKLYGEDLPQIVIDRLEKELKSIIGNGFAVIYLISQRLVKKSLDDGYLVGSRGSVGSSFVATMTEITEVNPLPPHYICPNCKTSEFFNDGSVGSGFDLPDKTCETCGAPLIKEGQDIPFETFLGFKGDKVPDIDLNFSGEYQPNAHNYTKVLFGEDKVFRAGTIGTVAEKTAFGYVKGYLNDQGIHKRGAEIDRLVKGCTGVKRTTGQHPGGIIVVPDYMDIYDFTPIQYPADDQNSAWMTTHFDFHSIHDNVLKLDILGHDDPTMIRMLQDLSGIDPKTIPVDDKEVMQIFSTPESLGVTEDEILCKTGTFGVPEFGTGFVRQMLEDTKPTTFSELVQISGLSHGTDVWLGNAQELIKTGICDLSSVIGCRDDIMVYLMYAGLEPSMAFKIMESVRKGKGLTEEMIETMKENEVPDWYLDSCLKIKYMFPKAHAAAYVLMAVRIAYFKVHHPLYYYASYFTIRASDFDLITMIKDKTSIRNTVKDMYSRYMDLGKKEKDVLTVLEIMNEMAHRGYRMQPISLEKSQAFEFIIEGDTLIPPFISVPGLGENVAKRIVEARDDGPFLSKEDLNKKAGLSQKIIEYLDELGSLPNLPDKAQLSIFDM.

The Exonuclease domain occupies 422–578; it reads YVVFDVETTG…YDTEATAYIF (157 aa).

The protein belongs to the DNA polymerase type-C family. PolC subfamily.

Its subcellular location is the cytoplasm. The catalysed reaction is DNA(n) + a 2'-deoxyribonucleoside 5'-triphosphate = DNA(n+1) + diphosphate. Required for replicative DNA synthesis. This DNA polymerase also exhibits 3' to 5' exonuclease activity. The protein is DNA polymerase III PolC-type of Staphylococcus aureus (strain bovine RF122 / ET3-1).